Reading from the N-terminus, the 290-residue chain is Ribosomal protein L11 methyltransferase (290 aa).

S-adenosyl-L-methionine-binding residues include Thr135, Gly158, Asp180, and Asn227.

The protein belongs to the methyltransferase superfamily. PrmA family.

The protein resides in the cytoplasm. It carries out the reaction L-lysyl-[protein] + 3 S-adenosyl-L-methionine = N(6),N(6),N(6)-trimethyl-L-lysyl-[protein] + 3 S-adenosyl-L-homocysteine + 3 H(+). Methylates ribosomal protein L11. In Mesorhizobium japonicum (strain LMG 29417 / CECT 9101 / MAFF 303099) (Mesorhizobium loti (strain MAFF 303099)), this protein is Ribosomal protein L11 methyltransferase.